A 284-amino-acid chain; its full sequence is Nucleoid occlusion protein (284 aa).

Positions 143–162 (EALAQRVGKSQSAIANKMRL) form a DNA-binding region, H-T-H motif.

It belongs to the ParB family.

Its subcellular location is the cytoplasm. It is found in the nucleoid. Its function is as follows. Effects nucleoid occlusion by binding relatively nonspecifically to DNA and preventing the assembly of the division machinery in the vicinity of the nucleoid, especially under conditions that disturb the cell cycle. It helps to coordinate cell division and chromosome segregation by preventing the formation of the Z ring through the nucleoid, which would cause chromosome breakage. The polypeptide is Nucleoid occlusion protein (Listeria monocytogenes serovar 1/2a (strain ATCC BAA-679 / EGD-e)).